The following is a 226-amino-acid chain: Large ribosomal subunit protein uL1 (226 aa).

This sequence belongs to the universal ribosomal protein uL1 family. Part of the 50S ribosomal subunit.

Binds directly to 23S rRNA. The L1 stalk is quite mobile in the ribosome, and is involved in E site tRNA release. Functionally, protein L1 is also a translational repressor protein, it controls the translation of the L11 operon by binding to its mRNA. The chain is Large ribosomal subunit protein uL1 from Buchnera aphidicola subsp. Cinara cedri (strain Cc).